The primary structure comprises 268 residues: Undecaprenyl-diphosphatase 1 (268 aa).

7 helical membrane-spanning segments follow: residues 5–25 (TIVE…IPVS), 43–63 (GKAF…SVYF), 81–101 (HFVI…ALAH), 107–127 (VLFE…VILL), 185–205 (AEFS…FDLF), 214–234 (ADLP…LFVV), and 248–268 (LFGW…MIWG).

This sequence belongs to the UppP family.

It localises to the cell inner membrane. It catalyses the reaction di-trans,octa-cis-undecaprenyl diphosphate + H2O = di-trans,octa-cis-undecaprenyl phosphate + phosphate + H(+). Its function is as follows. Catalyzes the dephosphorylation of undecaprenyl diphosphate (UPP). Confers resistance to bacitracin. This is Undecaprenyl-diphosphatase 1 from Mesorhizobium japonicum (strain LMG 29417 / CECT 9101 / MAFF 303099) (Mesorhizobium loti (strain MAFF 303099)).